Consider the following 73-residue polypeptide: Bacterioferritin-associated ferredoxin (73 aa).

2 residues coordinate [2Fe-2S] cluster: Cys-4 and Cys-6. The phosphate site is built by Arg-26 and Arg-29. Residues Cys-38 and Cys-41 each coordinate [2Fe-2S] cluster. Residue Lys-46 coordinates phosphate.

Belongs to the Bfd family. Monomer. Interacts with BfrB; up to 12 Bfd proteins can bind to the BfrB bacterioferritin complex (BFR). One Bfd protein binds to a BfrB dimer in the BFR, with the [2Fe-2S] cluster positioned about 22 Angstroms above the heme of BfrB. Does not interact with FtnA. [2Fe-2S] cluster serves as cofactor. The cofactor is phosphate.

Its function is as follows. Required for mobilization of iron from the bacterioferritin (BFR) complex, composed of BfrB and FtnA in varying proportions; mobilization requires the [2Fe-2S] cluster of this protein. Reduction of the BfrB heme group occurs in the presence of Bfd, strongly suggesting that the BfrB-Bfd complex allows heme to mediate electron transfer from FPR to the Fe(3+) iron core in the BFR prior to its release as Fe(2+). The sequence is that of Bacterioferritin-associated ferredoxin from Pseudomonas aeruginosa (strain ATCC 15692 / DSM 22644 / CIP 104116 / JCM 14847 / LMG 12228 / 1C / PRS 101 / PAO1).